The primary structure comprises 130 residues: Seminal plasma protein pB1 (130 aa).

A signal peptide spans 1 to 25; that stretch reads MAPRLGIFLLWAGVSVFLPLDPVNG. 2 consecutive Fibronectin type-II domains span residues 39–83 and 84–130; these read TSDD…YCRS and TDYA…WRYC. 4 disulfide bridges follow: Cys44–Cys68, Cys58–Cys81, Cys89–Cys115, and Cys103–Cys130.

This sequence belongs to the seminal plasma protein family. Component of seminal plasma.

It is found in the secreted. In terms of biological role, may form a complex with spermadhesin AQN-1 which possesses phosphorylcholine-binding activity. In Sus scrofa (Pig), this protein is Seminal plasma protein pB1.